Here is a 353-residue protein sequence, read N- to C-terminus: MNKLSLFVYLFFFLSFLFLFLYLLQPFFNPIVWAIVFGIVLYPLYGFIKRKLKSENLAAFLVIFIVLVAIVIPFTIFAVITAQQIIVFSIKVVNFVQTHSVNDLINSLKEIPFLKEKRESLEPLLNYLQSEEFRRALINALNSILTFVGDRLRSYVYTAGTSLFHVFVFLLTLFFILRDGEKVLKEIINSIPMKREDLEEILKTIYRTVLAVIYGTVGTAVAQSIMGFIGYSLAGVEFALIWALITFFAAFVPPFGAAFVWVPMDIYLFTTKGIKEGLILLFFGTFLISTMDNIVRPLVMKQGIKLPYVALFFSTIGGLIKFGFIGVFLGPIILSTMLASVKIYRRRVIHSGI.

A run of 8 helical transmembrane segments spans residues Leu4–Leu24, Phe28–Ile48, Phe60–Ile80, Val156–Ile176, Val209–Ile229, Leu240–Val260, Leu268–Ile288, and Val309–Leu329.

Belongs to the autoinducer-2 exporter (AI-2E) (TC 2.A.86) family.

The protein localises to the cell membrane. This Aquifex aeolicus (strain VF5) protein is Putative transport protein aq_740.